We begin with the raw amino-acid sequence, 644 residues long: MLRSRRSRSRHGAQACAVMSAVLLLASVSLLYTRLSLFSSHSPNHLRSGSSEDTVLFPDSVLVSDSDVETTGGGGRGSTTSTEDRIDEHDDAIEDDGVSNEEDENQDAEQEQEVDLNRNKAASSSGFYFDHVNGVIRRAFNKRSIDEWDYDYTGFSIDSDSSGDKSSRAAFGSDDVPLDESIRRKIVEVTSVEDALLLKSGKKVSPLRQGWGDWFDKKGDFLRRDRMFKSNIETLNPLNNPMLQDPDSVGNTGLTRGDKVVQKWRLNQIKRNPFMAKKPLSVVSEKKEPNEFRLLSSVGEIKRGERKTLDNDEKIEREEQKNVESERKHDEVTEHMYADGTKWGYYPGIEPSLSFSDFMDSFFRKEKCSMRVFMVWNSPGWMFSVRHQRGLESLLSQHRDACVVVFSETVELDFFRNSFVKDSYKVAVAMPNLDELLQDTPTHVFASVWFDWRKTKFYPTHYSELVRLAALYKYGGVYLDSDVIVLGSLSSLRNTIGMEDQVAGESLNGAVMSFEKKSPFLLECLNEYYLTYDDKCLRCNGADLLTRVAKRFLNGKNRRMNQQELNIRPSSVFFPINSQQITNYFAYPAIEDERSQQDESFKKILNESLTFHFWNSVTSSLIPEPESLVAKFLDHSCIRCSDVL.

Residues 65–117 are disordered; that stretch reads DSDVETTGGGGRGSTTSTEDRIDEHDDAIEDDGVSNEEDENQDAEQEQEVDLN. Residues 89–114 show a composition bias toward acidic residues; that stretch reads HDDAIEDDGVSNEEDENQDAEQEQEV.

This is an uncharacterized protein from Arabidopsis thaliana (Mouse-ear cress).